The chain runs to 291 residues: Pantothenate synthetase (291 aa).

M33–H40 contributes to the ATP binding site. H40 (proton donor) is an active-site residue. Q64 provides a ligand contact to (R)-pantoate. Q64 is a binding site for beta-alanine. G157–D160 contributes to the ATP binding site. Q163 contacts (R)-pantoate. ATP contacts are provided by residues V186 and L194–R197.

It belongs to the pantothenate synthetase family. As to quaternary structure, homodimer.

It is found in the cytoplasm. It carries out the reaction (R)-pantoate + beta-alanine + ATP = (R)-pantothenate + AMP + diphosphate + H(+). Its pathway is cofactor biosynthesis; (R)-pantothenate biosynthesis; (R)-pantothenate from (R)-pantoate and beta-alanine: step 1/1. Functionally, catalyzes the condensation of pantoate with beta-alanine in an ATP-dependent reaction via a pantoyl-adenylate intermediate. This is Pantothenate synthetase from Rubrobacter xylanophilus (strain DSM 9941 / JCM 11954 / NBRC 16129 / PRD-1).